The primary structure comprises 206 residues: Small ribosomal subunit protein uS4 (206 aa).

The segment covering 1–16 (MTKRQESKYKIDRRMG) has biased composition (basic and acidic residues). The interval 1–46 (MTKRQESKYKIDRRMGENIWGRPKSPVNRREYGPGQHGQRRKGKLS) is disordered. One can recognise an S4 RNA-binding domain in the interval 94–154 (RRLDAVVYRA…EKSKQLAIVL (61 aa)).

The protein belongs to the universal ribosomal protein uS4 family. Part of the 30S ribosomal subunit. Contacts protein S5. The interaction surface between S4 and S5 is involved in control of translational fidelity.

Its function is as follows. One of the primary rRNA binding proteins, it binds directly to 16S rRNA where it nucleates assembly of the body of the 30S subunit. In terms of biological role, with S5 and S12 plays an important role in translational accuracy. This chain is Small ribosomal subunit protein uS4, found in Parvibaculum lavamentivorans (strain DS-1 / DSM 13023 / NCIMB 13966).